Reading from the N-terminus, the 548-residue chain is Chaperonin GroEL (548 aa).

Residues Thr-30–Pro-33, Lys-51, Asp-87–Thr-91, Gly-415, Asn-479–Ala-481, and Asp-495 each bind ATP.

It belongs to the chaperonin (HSP60) family. In terms of assembly, forms a cylinder of 14 subunits composed of two heptameric rings stacked back-to-back. Interacts with the co-chaperonin GroES.

It is found in the cytoplasm. It carries out the reaction ATP + H2O + a folded polypeptide = ADP + phosphate + an unfolded polypeptide.. Its function is as follows. Together with its co-chaperonin GroES, plays an essential role in assisting protein folding. The GroEL-GroES system forms a nano-cage that allows encapsulation of the non-native substrate proteins and provides a physical environment optimized to promote and accelerate protein folding. The protein is Chaperonin GroEL of Klebsiella aerogenes (strain ATCC 13048 / DSM 30053 / CCUG 1429 / JCM 1235 / KCTC 2190 / NBRC 13534 / NCIMB 10102 / NCTC 10006 / CDC 819-56) (Enterobacter aerogenes).